The sequence spans 945 residues: Kinesin-like protein CIN8 (945 aa).

The Kinesin motor domain maps to 22–409 (NITVAVRCRG…LEYAAKAKNI (388 aa)). ATP is bound at residue 114–121 (GMTSTGKT). Residues 190–243 (IFDSSSMNHSSRASSQSNSPREPEVAHNGFSRRRQRPPPVKANRMSATKQQLSE) are disordered. Low complexity predominate over residues 193–208 (SSSMNHSSRASSQSNS). Polar residues predominate over residues 234–243 (MSATKQQLSE). 2 coiled-coil regions span residues 450 to 562 (MSHE…DIKE) and 634 to 675 (LKEF…YLDQ).

This sequence belongs to the TRAFAC class myosin-kinesin ATPase superfamily. Kinesin family. BimC subfamily.

Its subcellular location is the cytoplasm. The protein resides in the cytoskeleton. It localises to the spindle. In terms of biological role, elongates the mitotic spindle by interacting with spindle microtubules to generate an outward force pushing spindle poles apart. Following spindle assembly, CIN8 and KIP1 apparently act to oppose a force, possibly generated by KAR3, that draws separated poles back together. This Eremothecium gossypii (strain ATCC 10895 / CBS 109.51 / FGSC 9923 / NRRL Y-1056) (Yeast) protein is Kinesin-like protein CIN8 (CIN8).